Here is a 409-residue protein sequence, read N- to C-terminus: MLGAVKMEGHEHAADWSTYYGEPECYTSVSNMNTGLGMNSMNTYMTMSGMSSTANMTAANTMNMSYVNTGMSPSMTGMSPGTGAMAGMGAGMTGMSAALSPTMSPMAAQAPSMNALTSYSNMNAMSPMYGQSNINRSRDPKTYRRSYTHAKPPYSYISLITMAIQQSPSKMLTLSEIYQWIMDLFPFYRQNQQRWQNSIRHSLSFNDCFLKVPRSPDKPGKGSFWTLHPDSGNMFENGCYLRRQKRFKCDKKLSKDPSRKTSEGGSNSSSESCNGNESPHSNSSSNELKRSLSDMKSGQGLSPDHAASPTSQAQHLLAQHHSVLAHEGHLKPEHHYSFNHPFSINNLMSSEQQHHKMDLKTYEQVMHYGYGSPMAGTLSMGSMASKAGLDSPDTSYYQGVYSRPILNSS.

The fork-head DNA-binding region spans Ala150 to Leu241. A compositionally biased stretch (basic and acidic residues) spans Asp250–Ser262. Residues Asp250–His315 form a disordered region. Low complexity predominate over residues Glu263–Asn286.

It is found in the nucleus. Functionally, may play a crucial role in specification of both the axial mesendoderm and the ventral nervous system. In Danio rerio (Zebrafish), this protein is Forkhead box protein A2 (foxa2).